Here is a 100-residue protein sequence, read N- to C-terminus: Putative septation protein SpoVG (100 aa).

The protein belongs to the SpoVG family.

Its function is as follows. Could be involved in septation. This is Putative septation protein SpoVG from Staphylococcus aureus (strain JH1).